Consider the following 661-residue polypeptide: PAN2-PAN3 deadenylation complex subunit PAN3 (661 aa).

2 disordered regions span residues 1-26 (MASA…AREN) and 53-130 (DPHK…LRQD). The segment at 26–55 (NAKDTLCRNITIYGRCRYEDKGCAFNHDPH) adopts a C3H1-type zinc-finger fold. Positions 75–102 (SFTPSLLSSNGSSPTSTPATTKKMTTIS) are enriched in low complexity. The segment covering 115-130 (SVVSRSNASTPGLRQD) has biased composition (polar residues). Residues 263-524 (QTLPNTQLPA…NIDIFITGIS (262 aa)) are pseudokinase domain. ATP is bound by residues arginine 315, 364 to 371 (DYHPLSKT), and 424 to 425 (SK). Residues 525–563 (SQLMSTFDSALHLDDQLTSDLSRELENGRLVRLMTKLNF) are a coiled coil. Positions 564-661 (VNERPEYEHD…ALMKPARRMH (98 aa)) are knob domain.

This sequence belongs to the protein kinase superfamily. PAN3 family. In terms of assembly, homodimer. Forms a heterotrimer with a catalytic subunit pan2 to form the poly(A)-nuclease (PAN) deadenylation complex. Interacts (via PAM-2 motif) with poly(A)-binding protein pab1 (via PABC domain), conferring substrate specificity of the enzyme complex.

The protein resides in the cytoplasm. In terms of biological role, regulatory subunit of the poly(A)-nuclease (PAN) deadenylation complex, one of two cytoplasmic mRNA deadenylases involved in mRNA turnover. PAN specifically shortens poly(A) tails of RNA and the activity is stimulated by poly(A)-binding protein pab1. PAN deadenylation is followed by rapid degradation of the shortened mRNA tails by the CCR4-NOT complex. Deadenylated mRNAs are then degraded by two alternative mechanisms, namely exosome-mediated 3'-5' exonucleolytic degradation, or deadenylation-dependent mRNA decaping and subsequent 5'-3' exonucleolytic degradation by xrn1. May also be involved in post-transcriptional maturation of mRNA poly(A) tails. pan3 acts as a positive regulator for PAN activity, recruiting the catalytic subunit pan2 to mRNA via its interaction with RNA and with pab1. This is PAN2-PAN3 deadenylation complex subunit PAN3 from Neosartorya fischeri (strain ATCC 1020 / DSM 3700 / CBS 544.65 / FGSC A1164 / JCM 1740 / NRRL 181 / WB 181) (Aspergillus fischerianus).